A 353-amino-acid polypeptide reads, in one-letter code: Photosystem II D2 protein (353 aa).

Position 2 is an N-acetylthreonine (threonine 2). Threonine 2 is subject to Phosphothreonine. Residues 41 to 61 form a helical membrane-spanning segment; that stretch reads CAYFALGGWFTGTTFVTSWYT. Position 118 (histidine 118) interacts with chlorophyll a. A helical membrane pass occupies residues 125–141; the sequence is GFMLRQFELARSVQLRP. Pheophytin a is bound by residues glutamine 130 and asparagine 143. A helical transmembrane segment spans residues 153 to 166; that stretch reads VFVSVFLIYPLGQS. Histidine 198 lines the chlorophyll a pocket. A helical membrane pass occupies residues 208–228; it reads AALLCAIHGATVENTLFEDGD. A plastoquinone contacts are provided by histidine 215 and phenylalanine 262. Histidine 215 provides a ligand contact to Fe cation. Histidine 269 provides a ligand contact to Fe cation. Residues 279–295 traverse the membrane as a helical segment; sequence GLWMSALGVVGLALNLR.

The protein belongs to the reaction center PufL/M/PsbA/D family. In terms of assembly, PSII is composed of 1 copy each of membrane proteins PsbA, PsbB, PsbC, PsbD, PsbE, PsbF, PsbH, PsbI, PsbJ, PsbK, PsbL, PsbM, PsbT, PsbX, PsbY, PsbZ, Psb30/Ycf12, at least 3 peripheral proteins of the oxygen-evolving complex and a large number of cofactors. It forms dimeric complexes. The D1/D2 heterodimer binds P680, chlorophylls that are the primary electron donor of PSII, and subsequent electron acceptors. It shares a non-heme iron and each subunit binds pheophytin, quinone, additional chlorophylls, carotenoids and lipids. There is also a Cl(-1) ion associated with D1 and D2, which is required for oxygen evolution. The PSII complex binds additional chlorophylls, carotenoids and specific lipids. serves as cofactor.

It localises to the plastid. Its subcellular location is the chloroplast thylakoid membrane. The catalysed reaction is 2 a plastoquinone + 4 hnu + 2 H2O = 2 a plastoquinol + O2. Functionally, photosystem II (PSII) is a light-driven water:plastoquinone oxidoreductase that uses light energy to abstract electrons from H(2)O, generating O(2) and a proton gradient subsequently used for ATP formation. It consists of a core antenna complex that captures photons, and an electron transfer chain that converts photonic excitation into a charge separation. The D1/D2 (PsbA/PsbD) reaction center heterodimer binds P680, the primary electron donor of PSII as well as several subsequent electron acceptors. D2 is needed for assembly of a stable PSII complex. The sequence is that of Photosystem II D2 protein from Dioscorea elephantipes (Elephant's foot yam).